Consider the following 183-residue polypeptide: MDSGEQGETSKAPLNKGVSRGVSILDLILRVIAVISTLASAIAMGTTNETLPLFTPFIQFKARYSDLPALTFFVVANSIVSAYLILSLPLSIAHIIRSGAKYSRLVLIIFDAAMLALVTAASSAATAIVYLAHKGNVRANWLAICQQLDSFCERTSGSLVGSFGAMVLLILLILLSAMALARR.

The Cytoplasmic portion of the chain corresponds to 1-23; that stretch reads MDSGEQGETSKAPLNKGVSRGVS. The chain crosses the membrane as a helical span at residues 24–44; it reads ILDLILRVIAVISTLASAIAM. At 45–71 the chain is on the extracellular side; sequence GTTNETLPLFTPFIQFKARYSDLPALT. An N-linked (GlcNAc...) asparagine glycan is attached at asparagine 48. Residues 72 to 92 traverse the membrane as a helical segment; that stretch reads FFVVANSIVSAYLILSLPLSI. Topologically, residues 93 to 104 are cytoplasmic; the sequence is AHIIRSGAKYSR. The helical transmembrane segment at 105 to 125 threads the bilayer; sequence LVLIIFDAAMLALVTAASSAA. The Extracellular segment spans residues 126-158; the sequence is TAIVYLAHKGNVRANWLAICQQLDSFCERTSGS. Residues 159–179 form a helical membrane-spanning segment; sequence LVGSFGAMVLLILLILLSAMA. The Cytoplasmic segment spans residues 180–183; it reads LARR.

This sequence belongs to the Casparian strip membrane proteins (CASP) family. As to quaternary structure, homodimer and heterodimers.

The protein localises to the cell membrane. Functionally, regulates membrane-cell wall junctions and localized cell wall deposition. Required for establishment of the Casparian strip membrane domain (CSD) and the subsequent formation of Casparian strips, a cell wall modification of the root endodermis that determines an apoplastic barrier between the intraorganismal apoplasm and the extraorganismal apoplasm and prevents lateral diffusion. The protein is Casparian strip membrane protein 2 of Triticum aestivum (Wheat).